Here is a 225-residue protein sequence, read N- to C-terminus: 3-dehydroquinate dehydratase (225 aa).

3-dehydroquinate-binding positions include 30–32 (EWR) and Arg-62. The Proton donor/acceptor role is filled by His-118. Lys-143 serves as the catalytic Schiff-base intermediate with substrate. 3-dehydroquinate is bound by residues Arg-186 and Gln-209.

The protein belongs to the type-I 3-dehydroquinase family. Homodimer.

It carries out the reaction 3-dehydroquinate = 3-dehydroshikimate + H2O. The protein operates within metabolic intermediate biosynthesis; chorismate biosynthesis; chorismate from D-erythrose 4-phosphate and phosphoenolpyruvate: step 3/7. Its function is as follows. Involved in the third step of the chorismate pathway, which leads to the biosynthesis of aromatic amino acids. Catalyzes the cis-dehydration of 3-dehydroquinate (DHQ) and introduces the first double bond of the aromatic ring to yield 3-dehydroshikimate. In Streptococcus agalactiae serotype Ia (strain ATCC 27591 / A909 / CDC SS700), this protein is 3-dehydroquinate dehydratase.